The following is a 161-amino-acid chain: uncharacterized protein (161 aa).

Residues 126–161 (TPSNCGESSTSSGQSSGDESNCSLRTHGVYTRGEQH) form a disordered region. A compositionally biased stretch (low complexity) spans 128–148 (SNCGESSTSSGQSSGDESNCS).

It belongs to the herpesviridae US1 family.

This is an uncharacterized protein from Human cytomegalovirus (strain AD169) (HHV-5).